The sequence spans 315 residues: Protein phosphatase PTC7 homolog fig (315 aa).

A PPM-type phosphatase domain is found at 54-309; sequence KHSIASAKDN…DDITVILATV (256 aa). Aspartate 86, glycine 87, and aspartate 231 together coordinate Mn(2+).

The protein belongs to the PP2C family. The cofactor is Mg(2+). Requires Mn(2+) as cofactor.

The enzyme catalyses O-phospho-L-seryl-[protein] + H2O = L-seryl-[protein] + phosphate. It catalyses the reaction O-phospho-L-threonyl-[protein] + H2O = L-threonyl-[protein] + phosphate. In Drosophila willistoni (Fruit fly), this protein is Protein phosphatase PTC7 homolog fig.